A 186-amino-acid polypeptide reads, in one-letter code: Ribosome-recycling factor (186 aa).

Belongs to the RRF family.

The protein resides in the cytoplasm. Responsible for the release of ribosomes from messenger RNA at the termination of protein biosynthesis. May increase the efficiency of translation by recycling ribosomes from one round of translation to another. This chain is Ribosome-recycling factor, found in Paraburkholderia xenovorans (strain LB400).